A 292-amino-acid polypeptide reads, in one-letter code: Nucleotide-binding protein Ldb0621 (292 aa).

Residue 14-21 coordinates ATP; that stretch reads GMSGAGKT. 64–67 contacts GTP; the sequence is DLRV.

Belongs to the RapZ-like family.

Functionally, displays ATPase and GTPase activities. The chain is Nucleotide-binding protein Ldb0621 from Lactobacillus delbrueckii subsp. bulgaricus (strain ATCC 11842 / DSM 20081 / BCRC 10696 / JCM 1002 / NBRC 13953 / NCIMB 11778 / NCTC 12712 / WDCM 00102 / Lb 14).